The following is a 469-amino-acid chain: Argininosuccinate lyase (469 aa).

This sequence belongs to the lyase 1 family. Argininosuccinate lyase subfamily.

The protein localises to the cytoplasm. The catalysed reaction is 2-(N(omega)-L-arginino)succinate = fumarate + L-arginine. The protein operates within amino-acid biosynthesis; L-arginine biosynthesis; L-arginine from L-ornithine and carbamoyl phosphate: step 3/3. The sequence is that of Argininosuccinate lyase from Burkholderia cenocepacia (strain HI2424).